The sequence spans 20 residues: Dentinal fluid transport-stimulating peptide (20 aa).

The disordered stretch occupies residues 1–20 (GVIAWELQHNEPGRKDSTAG). The segment covering 8–20 (QHNEPGRKDSTAG) has biased composition (basic and acidic residues).

Its function is as follows. This peptide stimulates the transport of dentinal fluid, which is important for the prevention of dental caries. In Rattus norvegicus (Rat), this protein is Dentinal fluid transport-stimulating peptide.